Consider the following 349-residue polypeptide: Deoxyguanosinetriphosphate triphosphohydrolase-like protein (349 aa).

In terms of domain architecture, HD spans 80-197; the sequence is RLTHTLEVAQ…VKYSDKIAYV (118 aa).

This sequence belongs to the dGTPase family. Type 2 subfamily.

The protein is Deoxyguanosinetriphosphate triphosphohydrolase-like protein of Clostridium tetani (strain Massachusetts / E88).